The chain runs to 125 residues: Ribosome-binding factor A (125 aa).

Belongs to the RbfA family. As to quaternary structure, monomer. Binds 30S ribosomal subunits, but not 50S ribosomal subunits or 70S ribosomes.

It localises to the cytoplasm. Its function is as follows. One of several proteins that assist in the late maturation steps of the functional core of the 30S ribosomal subunit. Associates with free 30S ribosomal subunits (but not with 30S subunits that are part of 70S ribosomes or polysomes). Required for efficient processing of 16S rRNA. May interact with the 5'-terminal helix region of 16S rRNA. The sequence is that of Ribosome-binding factor A from Desulfitobacterium hafniense (strain DSM 10664 / DCB-2).